Consider the following 109-residue polypeptide: Urocortin-2 (109 aa).

Positions 1–22 (MTRWALVVFMVLMLDRVPGTPI) are cleaved as a signal peptide. Positions 23-67 (PTFQLLPQNYPETTPSSVSSESPSDTTTGPSASWSNSKASPYLDT) are excised as a propeptide. Positions 24 to 60 (TFQLLPQNYPETTPSSVSSESPSDTTTGPSASWSNSK) are disordered. Residues 33–50 (PETTPSSVSSESPSDTTT) show a composition bias toward low complexity. A compositionally biased stretch (polar residues) spans 51–60 (GPSASWSNSK). V106 bears the Valine amide; partial mark.

The protein belongs to the sauvagine/corticotropin-releasing factor/urotensin I family. As to quaternary structure, binds with high affinity to CRF receptors 2-alpha and 2-beta. In terms of processing, glycosylated.

The protein localises to the secreted. Suppresses food intake, delays gastric emptying and decreases heat-induced edema. Might represent an endogenous ligand for maintaining homeostasis after stress. The protein is Urocortin-2 (Ucn2) of Rattus norvegicus (Rat).